The primary structure comprises 495 residues: Glycerol kinase (495 aa).

Thr16 serves as a coordination point for ADP. Thr16 and Thr17 together coordinate ATP. Position 16 (Thr16) interacts with sn-glycerol 3-phosphate. ADP is bound at residue Arg20. Sn-glycerol 3-phosphate is bound by residues Arg86, Glu87, Tyr138, and Asp246. Glycerol is bound by residues Arg86, Glu87, Tyr138, Asp246, and Gln247. Positions 268 and 316 each coordinate ADP. 4 residues coordinate ATP: Thr268, Gly316, Gln320, and Gly417. ADP contacts are provided by Gly417 and Asn421.

Belongs to the FGGY kinase family.

The catalysed reaction is glycerol + ATP = sn-glycerol 3-phosphate + ADP + H(+). Its pathway is polyol metabolism; glycerol degradation via glycerol kinase pathway; sn-glycerol 3-phosphate from glycerol: step 1/1. Its activity is regulated as follows. Inhibited by fructose 1,6-bisphosphate (FBP). Key enzyme in the regulation of glycerol uptake and metabolism. Catalyzes the phosphorylation of glycerol to yield sn-glycerol 3-phosphate. In Synechocystis sp. (strain ATCC 27184 / PCC 6803 / Kazusa), this protein is Glycerol kinase.